The following is a 352-amino-acid chain: Selenide, water dikinase (352 aa).

Cys-23 is a catalytic residue. ATP-binding positions include Lys-26 and 54–56; that span reads SRD. Asp-57 contributes to the Mg(2+) binding site. Residues Asp-74, Asp-97, and 145–147 each bind ATP; that span reads GHS. Asp-97 is a binding site for Mg(2+). Mg(2+) is bound at residue Asp-233.

It belongs to the selenophosphate synthase 1 family. Class I subfamily. In terms of assembly, homodimer. The cofactor is Mg(2+).

It carries out the reaction hydrogenselenide + ATP + H2O = selenophosphate + AMP + phosphate + 2 H(+). In terms of biological role, synthesizes selenophosphate from selenide and ATP. The chain is Selenide, water dikinase from Shewanella baltica (strain OS155 / ATCC BAA-1091).